Reading from the N-terminus, the 146-residue chain is VQWTAEEKQLITGLWGKVNVADCGAEALARLLIVYPWTQRFFASFGNLSSATAVIGNPMVRAHGKKVLTSFGEAVKNLDSIKSTFAQLSELHCDKLHVDPENFRLLGDILIIVLAAHFSKDFTPEAQQAWAKLVRAVAHALARKYH.

One can recognise a Globin domain in the interval 2–146; that stretch reads QWTAEEKQLI…VAHALARKYH (145 aa). Histidine 63 and histidine 92 together coordinate heme b.

The protein belongs to the globin family. In terms of assembly, heterotetramer of two alpha chains and two beta chains. Red blood cells.

Functionally, involved in oxygen transport from the lung to the various peripheral tissues. The protein is Hemoglobin subunit beta (HBB) of Apus apus (Common swift).